A 67-amino-acid polypeptide reads, in one-letter code: Bombesin (67 aa).

Positions 1-30 (MLLLSAVKTLLLAWLGIVLVFMSIIKSAML) are cleaved as a signal peptide. The propeptide occupies 31–49 (DFLQEAGKLEGIETYKKEA). Gln-50 is modified (pyrrolidone carboxylic acid). Position 64 is a methionine amide (Met-64).

Expressed by the skin glands.

It localises to the secreted. In terms of biological role, stimulates smooth muscle contraction in isolated rat stomach strip. In Rana shuchinae (Sichuan frog), this protein is Bombesin.